A 681-amino-acid chain; its full sequence is Auxin response factor 8 (681 aa).

The TF-B3 DNA-binding region spans 120–222 (FAKTLTQSDA…DLHVGIRRAK (103 aa)). 2 disordered regions span residues 474 to 518 (LRRP…AKPP) and 534 to 577 (SLSG…TSSE). Composition is skewed to polar residues over residues 534–555 (SLSG…NTEK) and 564–577 (GVIQ…TSSE). In terms of domain architecture, PB1 spans 595 to 675 (PGQCKVFIES…RRLTILTDAG (81 aa)).

This sequence belongs to the ARF family. Homodimers and heterodimers. As to expression, expressed in roots, culms, leaves and young panicles.

It is found in the nucleus. Functionally, auxin response factors (ARFs) are transcriptional factors that bind specifically to the DNA sequence 5'-TGTCTC-3' found in the auxin-responsive promoter elements (AuxREs). This is Auxin response factor 8 (ARF8) from Oryza sativa subsp. japonica (Rice).